Reading from the N-terminus, the 409-residue chain is Failed axon connections homolog (409 aa).

Residues 68–88 form a helical membrane-spanning segment; it reads YLTGGALLAAAAYLLHELLVI. The interval 372–393 is disordered; that stretch reads DEGAENSFSRTPDTDFTGHSLF.

It belongs to the FAX family.

The protein localises to the membrane. Its function is as follows. May play a role in axonal development. The sequence is that of Failed axon connections homolog (Faxc) from Mus musculus (Mouse).